The sequence spans 1190 residues: DNA-directed RNA polymerase subunit beta (1190 aa).

It belongs to the RNA polymerase beta chain family. The RNAP catalytic core consists of 2 alpha, 1 beta, 1 beta' and 1 omega subunit. When a sigma factor is associated with the core the holoenzyme is formed, which can initiate transcription.

It catalyses the reaction RNA(n) + a ribonucleoside 5'-triphosphate = RNA(n+1) + diphosphate. DNA-dependent RNA polymerase catalyzes the transcription of DNA into RNA using the four ribonucleoside triphosphates as substrates. The protein is DNA-directed RNA polymerase subunit beta of Geobacillus thermodenitrificans (strain NG80-2).